Reading from the N-terminus, the 227-residue chain is 2-C-methyl-D-erythritol 4-phosphate cytidylyltransferase (227 aa).

Belongs to the IspD/TarI cytidylyltransferase family. IspD subfamily.

It carries out the reaction 2-C-methyl-D-erythritol 4-phosphate + CTP + H(+) = 4-CDP-2-C-methyl-D-erythritol + diphosphate. It functions in the pathway isoprenoid biosynthesis; isopentenyl diphosphate biosynthesis via DXP pathway; isopentenyl diphosphate from 1-deoxy-D-xylulose 5-phosphate: step 2/6. Its function is as follows. Catalyzes the formation of 4-diphosphocytidyl-2-C-methyl-D-erythritol from CTP and 2-C-methyl-D-erythritol 4-phosphate (MEP). The protein is 2-C-methyl-D-erythritol 4-phosphate cytidylyltransferase of Thermosipho melanesiensis (strain DSM 12029 / CIP 104789 / BI429).